The chain runs to 81 residues: Photosystem I iron-sulfur center (81 aa).

4Fe-4S ferredoxin-type domains lie at 1-31 (MSHT…MVPW) and 37-68 (GQIA…IRVY). [4Fe-4S] cluster-binding residues include C11, C14, C17, C21, C48, C51, C54, and C58.

As to quaternary structure, the cyanobacterial PSI reaction center is composed of one copy each of PsaA,B,C,D,E,F,I,J,K,L,M and X, and forms trimeric complexes. It depends on [4Fe-4S] cluster as a cofactor.

The protein localises to the cellular thylakoid membrane. It carries out the reaction reduced [plastocyanin] + hnu + oxidized [2Fe-2S]-[ferredoxin] = oxidized [plastocyanin] + reduced [2Fe-2S]-[ferredoxin]. Functionally, apoprotein for the two 4Fe-4S centers FA and FB of photosystem I (PSI); essential for photochemical activity. FB is the terminal electron acceptor of PSI, donating electrons to ferredoxin. The C-terminus interacts with PsaA/B/D and helps assemble the protein into the PSI complex. Required for binding of PsaD and PsaE to PSI. PSI is a plastocyanin/cytochrome c6-ferredoxin oxidoreductase, converting photonic excitation into a charge separation, which transfers an electron from the donor P700 chlorophyll pair to the spectroscopically characterized acceptors A0, A1, FX, FA and FB in turn. The sequence is that of Photosystem I iron-sulfur center from Acaryochloris marina (strain MBIC 11017).